The primary structure comprises 403 residues: CCA-adding enzyme (403 aa).

2 residues coordinate ATP: G32 and R35. CTP is bound by residues G32 and R35. D45 and D47 together coordinate Mg(2+). ATP is bound by residues R116, D159, R162, R165, and R168. Positions 116, 159, 162, 165, and 168 each coordinate CTP.

The protein belongs to the tRNA nucleotidyltransferase/poly(A) polymerase family. Bacterial CCA-adding enzyme type 3 subfamily. As to quaternary structure, homodimer. Requires Mg(2+) as cofactor.

The catalysed reaction is a tRNA precursor + 2 CTP + ATP = a tRNA with a 3' CCA end + 3 diphosphate. The enzyme catalyses a tRNA with a 3' CCA end + 2 CTP + ATP = a tRNA with a 3' CCACCA end + 3 diphosphate. Functionally, catalyzes the addition and repair of the essential 3'-terminal CCA sequence in tRNAs without using a nucleic acid template. Adds these three nucleotides in the order of C, C, and A to the tRNA nucleotide-73, using CTP and ATP as substrates and producing inorganic pyrophosphate. tRNA 3'-terminal CCA addition is required both for tRNA processing and repair. Also involved in tRNA surveillance by mediating tandem CCA addition to generate a CCACCA at the 3' terminus of unstable tRNAs. While stable tRNAs receive only 3'-terminal CCA, unstable tRNAs are marked with CCACCA and rapidly degraded. This chain is CCA-adding enzyme, found in Streptococcus uberis (strain ATCC BAA-854 / 0140J).